A 249-amino-acid chain; its full sequence is 5'-nucleotidase SurE (249 aa).

Asp9, Asp10, Ser40, and Asn92 together coordinate a divalent metal cation.

The protein belongs to the SurE nucleotidase family. It depends on a divalent metal cation as a cofactor.

It localises to the cytoplasm. The enzyme catalyses a ribonucleoside 5'-phosphate + H2O = a ribonucleoside + phosphate. Functionally, nucleotidase that shows phosphatase activity on nucleoside 5'-monophosphates. This is 5'-nucleotidase SurE from Shewanella baltica (strain OS195).